Reading from the N-terminus, the 352-residue chain is MEKYEKIGKIGEGSYGVVFKCRNRDTGQIVAIKRFLETEDDPVIKKIALREIRMLKQLKHPNLVNLLEVFRRKRRLHLVFEYCDHTVLHELDRYQRGVPEPLVKNITWQTLQAVNFCHKHNCIHRDVKPENILITKQSAIKLCDFGFARLLTGPGDYYTDYVATRWYRSPELLVGDTQYGPPVDVWAIGCVFAELLSGVPLWPGKSDVDQLYLIRKTLGDLIPRHQQVFSMNQYFSGVKIPDPEDMETLELKFPNISYSALGFLKGCLHMDPAERLTCEQLLQHPYFDSIREVGELTRQHDKPARKTLRQSRKHLTGLQYLPQLTSSRILPALDNKKYHCSTKRFNYHFPNI.

The Protein kinase domain occupies Tyr-4–Phe-287. Residues Ile-10–Val-18 and Lys-33 each bind ATP. The [NKR]KIAxRE motif lies at Lys-45–Glu-51. Asp-126 functions as the Proton acceptor in the catalytic mechanism.

This sequence belongs to the protein kinase superfamily. CMGC Ser/Thr protein kinase family. CDC2/CDKX subfamily.

It is found in the cytoplasm. The protein resides in the nucleus. It carries out the reaction L-seryl-[protein] + ATP = O-phospho-L-seryl-[protein] + ADP + H(+). The catalysed reaction is L-threonyl-[protein] + ATP = O-phospho-L-threonyl-[protein] + ADP + H(+). The sequence is that of Cyclin-dependent kinase-like 1 from Mus musculus (Mouse).